Consider the following 112-residue polypeptide: UPF0342 protein STER_0693 (112 aa).

This sequence belongs to the UPF0342 family.

The protein is UPF0342 protein STER_0693 of Streptococcus thermophilus (strain ATCC BAA-491 / LMD-9).